The primary structure comprises 212 residues: MESKLPLLVGVTGGLGSGKSMVCRYLASMGCALFEADVVAKELQVRDSKVIEGITALFGKEVYSYNPKGELQLNRKDIAQVVFSNQEKLGALNRLIHPRVAVAFQQACDNAARSNVAILVKEAAILFESGAHAGLDVVVVVQAATELRVERAVQKGLGTREEILRRLAVQWAPEKLAALADVVIDNNGTPEALYEKTKQLYEQLLQQAMLRR.

The DPCK domain maps to 8–212; the sequence is LVGVTGGLGS…QLLQQAMLRR (205 aa). Residue 16–21 participates in ATP binding; that stretch reads GSGKSM.

It belongs to the CoaE family.

It is found in the cytoplasm. It carries out the reaction 3'-dephospho-CoA + ATP = ADP + CoA + H(+). Its pathway is cofactor biosynthesis; coenzyme A biosynthesis; CoA from (R)-pantothenate: step 5/5. Functionally, catalyzes the phosphorylation of the 3'-hydroxyl group of dephosphocoenzyme A to form coenzyme A. This is Dephospho-CoA kinase from Chlorobium chlorochromatii (strain CaD3).